A 313-amino-acid chain; its full sequence is Porphobilinogen deaminase (313 aa).

Cysteine 242 is modified (S-(dipyrrolylmethanemethyl)cysteine).

The protein belongs to the HMBS family. In terms of assembly, monomer. Requires dipyrromethane as cofactor.

It catalyses the reaction 4 porphobilinogen + H2O = hydroxymethylbilane + 4 NH4(+). It participates in porphyrin-containing compound metabolism; protoporphyrin-IX biosynthesis; coproporphyrinogen-III from 5-aminolevulinate: step 2/4. Its function is as follows. Tetrapolymerization of the monopyrrole PBG into the hydroxymethylbilane pre-uroporphyrinogen in several discrete steps. The polypeptide is Porphobilinogen deaminase (Pseudomonas putida (strain ATCC 700007 / DSM 6899 / JCM 31910 / BCRC 17059 / LMG 24140 / F1)).